We begin with the raw amino-acid sequence, 115 residues long: Large ribosomal subunit protein bL19 (115 aa).

This sequence belongs to the bacterial ribosomal protein bL19 family.

This protein is located at the 30S-50S ribosomal subunit interface and may play a role in the structure and function of the aminoacyl-tRNA binding site. This chain is Large ribosomal subunit protein bL19, found in Edwardsiella ictaluri (strain 93-146).